A 299-amino-acid chain; its full sequence is MPETKYPRLVIVTGLSGAGKTQAVRCLEDLGFFCVDNLPPSLIPGLVDLLGHPGKEGEGITKVALVMDIRGGEFFSGLDAALNYLDGLGIPYEILFLEAADEVLVRRYKETRRRHPLSSGGQILEGIIEERRRLEELRGRASKIIDTSELTPRQLKEQVSELFGSSQRRLIVSIISFGYKYGIPLDADLVMDVRFLPNPYYVPALRPFTGHDRCVEEFVMASPVTRQFIEQFAALLRFLIPHYLQEGKSHLVVAIGCTGGQHRSVTLANKLGELLQGENYSVTVKHRDVVRYLSTGNRR.

14–21 (GLSGAGKT) is a binding site for ATP. 68-71 (DIRG) contributes to the GTP binding site.

It belongs to the RapZ-like family.

Functionally, displays ATPase and GTPase activities. In Moorella thermoacetica (strain ATCC 39073 / JCM 9320), this protein is Nucleotide-binding protein Moth_0258.